The primary structure comprises 373 residues: Phosphoserine aminotransferase (373 aa).

Residue Arg-41 participates in L-glutamate binding. Pyridoxal 5'-phosphate is bound by residues Gly-75–Thr-76, Trp-101, Thr-152, Asp-172, and Gln-195. Position 196 is an N6-(pyridoxal phosphate)lysine (Lys-196). Asn-236–Thr-237 is a binding site for pyridoxal 5'-phosphate.

Belongs to the class-V pyridoxal-phosphate-dependent aminotransferase family. SerC subfamily. Homodimer. It depends on pyridoxal 5'-phosphate as a cofactor.

Its subcellular location is the cytoplasm. The enzyme catalyses O-phospho-L-serine + 2-oxoglutarate = 3-phosphooxypyruvate + L-glutamate. It catalyses the reaction 4-(phosphooxy)-L-threonine + 2-oxoglutarate = (R)-3-hydroxy-2-oxo-4-phosphooxybutanoate + L-glutamate. The protein operates within amino-acid biosynthesis; L-serine biosynthesis; L-serine from 3-phospho-D-glycerate: step 2/3. In terms of biological role, catalyzes the reversible conversion of 3-phosphohydroxypyruvate to phosphoserine and of 3-hydroxy-2-oxo-4-phosphonooxybutanoate to phosphohydroxythreonine. The polypeptide is Phosphoserine aminotransferase (Lactobacillus helveticus (strain DPC 4571)).